Reading from the N-terminus, the 217-residue chain is MOB kinase activator 3A (217 aa).

Cysteine 83, cysteine 88, histidine 165, and histidine 170 together coordinate Zn(2+).

Belongs to the MOB1/phocein family.

Functionally, may regulate the activity of kinases. This Homo sapiens (Human) protein is MOB kinase activator 3A (MOB3A).